Consider the following 206-residue polypeptide: Dual specificity phosphatase 29 (206 aa).

Positions 47–194 (HVNQVWPSVY…LRALDITLQE (148 aa)) constitute a Tyrosine-protein phosphatase domain. 138 to 145 (HCVMGRSR) provides a ligand contact to substrate. The Phosphocysteine intermediate role is filled by Cys-139.

Belongs to the protein-tyrosine phosphatase family. Non-receptor class dual specificity subfamily.

Its subcellular location is the cytoplasm. The protein localises to the nucleus. The enzyme catalyses O-phospho-L-tyrosyl-[protein] + H2O = L-tyrosyl-[protein] + phosphate. It carries out the reaction O-phospho-L-seryl-[protein] + H2O = L-seryl-[protein] + phosphate. It catalyses the reaction O-phospho-L-threonyl-[protein] + H2O = L-threonyl-[protein] + phosphate. Dual specificity phosphatase able to dephosphorylate phosphotyrosine, phosphoserine and phosphothreonine residues within the same substrate, with a preference for phosphotyrosine as a substrate. Involved in the modulation of AMPK and MAPK1/2 signaling pathways. The polypeptide is Dual specificity phosphatase 29 (dusp29) (Gasterosteus aculeatus (Three-spined stickleback)).